Consider the following 306-residue polypeptide: BRCA2 and CDKN1A-interacting protein (306 aa).

Residues 1 to 10 (MASRPKRRAV) are compositionally biased toward basic residues. The disordered stretch occupies residues 1 to 45 (MASRPKRRAVSRVPPALGDEEEEDEVEEQDEDDSDEEEDEEDEVV). The segment covering 18-45 (GDEEEEDEVEEQDEDDSDEEEDEEDEVV) has biased composition (acidic residues). Residues S34 and S104 each carry the phosphoserine modification. The segment at 51–159 (IEFEAYSISD…EKSMVEQLDR (109 aa)) is interaction with BRCA2. An interaction with CDKN1A region spans residues 153–251 (MVEQLDRLFN…NAEEEFFYEK (99 aa)). The residue at position 273 (S273) is a Phosphoserine.

The protein belongs to the BCP1 family. Interacts with BRCA2, CDKN1A and MTDH/LYRIC. Interacts with DCTN1/p150-glued and ACTR1A/ARP1. Interacts with alpha-, beta- and gamma-tubulins. Interacts with TENT5C; the interaction has no effect on TENT5C poly(A) polymerase function.

The protein resides in the nucleus. It is found in the cytoplasm. The protein localises to the cytoskeleton. Its subcellular location is the microtubule organizing center. It localises to the centrosome. The protein resides in the centriole. It is found in the spindle pole. Its function is as follows. During interphase, required for microtubule organizing and anchoring activities. During mitosis, required for the organization and stabilization of the spindle pole. May promote cell cycle arrest by enhancing the inhibition of CDK2 activity by CDKN1A. May be required for repair of DNA damage by homologous recombination in conjunction with BRCA2. May not be involved in non-homologous end joining (NHEJ). This Bos taurus (Bovine) protein is BRCA2 and CDKN1A-interacting protein (BCCIP).